Consider the following 146-residue polypeptide: MADVSSTELKAAYDEVLADSNDTNWCLFKYEGKNKIVLSGKGSGGFAELAQEINQPSERLYAYLRVVSGDDESKRSKFVFISWCGEEVGPLAKANVSVHKASVKQVIKNIGVEVHYTVADDLNEEELMTKVRKSSGADYSGNKSTN.

Positions 1–132 (MADVSSTELK…NEEELMTKVR (132 aa)) constitute an ADF-H domain.

It belongs to the actin-binding proteins ADF family. Coactosin subfamily. Post-translationally, the N-terminus is blocked.

The protein localises to the cytoplasm. It is found in the cytoskeleton. Functionally, binds to F-actin in a calcium independent manner. Binds to the filaments along their length. The sequence is that of Coactosin (coaA) from Dictyostelium discoideum (Social amoeba).